The sequence spans 476 residues: Glycogen synthase (476 aa).

K15 serves as a coordination point for ADP-alpha-D-glucose.

The protein belongs to the glycosyltransferase 1 family. Bacterial/plant glycogen synthase subfamily.

The catalysed reaction is [(1-&gt;4)-alpha-D-glucosyl](n) + ADP-alpha-D-glucose = [(1-&gt;4)-alpha-D-glucosyl](n+1) + ADP + H(+). The protein operates within glycan biosynthesis; glycogen biosynthesis. Its function is as follows. Synthesizes alpha-1,4-glucan chains using ADP-glucose. This chain is Glycogen synthase, found in Halalkalibacterium halodurans (strain ATCC BAA-125 / DSM 18197 / FERM 7344 / JCM 9153 / C-125) (Bacillus halodurans).